An 857-amino-acid polypeptide reads, in one-letter code: Protein app1 (857 aa).

In terms of domain architecture, ADF-H spans 6 to 133 (DTSTHGAEIR…NMDDIIRRVA (128 aa)). 3 disordered regions span residues 167 to 562 (AKVA…VPQR), 585 to 622 (EVPSVPQPPVAPVVPEAPSVPQPPVAPVAPEVPSVPQR), and 693 to 723 (QLNEPVVPPLPPHDETQEPQVGGDVKATEHT). A compositionally biased stretch (basic and acidic residues) spans 193–204 (KDSKDNSWDDSS). Positions 205 to 217 (KQSNTQTANTTSN) are enriched in low complexity. Residues 229–240 (AGRKEKSQENKP) are compositionally biased toward basic and acidic residues. Polar residues-rich tracts occupy residues 276–295 (SISTTTTGSSYRSAESSHAP), 371–385 (PPASTTASKQDSPST), 399–409 (KQVSSNETSAQ), 443–452 (KISSFNSKAG), and 498–511 (SSASQKAAQPSVIT). The span at 522-561 (VVPEAPSVHQPPAAPVAPEVPSAPQRPAAPVVPEAPSVPQ) shows a compositional bias: low complexity. Pro residues-rich tracts occupy residues 587 to 596 (PSVPQPPVAP) and 602 to 611 (PSVPQPPVAP). The segment covering 612–622 (VAPEVPSVPQR) has biased composition (low complexity). SH3 domains follow at residues 725 to 785 (PTKT…ITGP) and 800 to 857 (GPGK…VEEI).

The sequence is that of Protein app1 (app1) from Schizosaccharomyces pombe (strain 972 / ATCC 24843) (Fission yeast).